The primary structure comprises 912 residues: Tiger protein E1 (912 aa).

The first 22 residues, 1-22, serve as a signal peptide directing secretion; that stretch reads MKLKHLTIFLFIFIYRFLFVKS. At 23–815 the chain is on the extracellular side; sequence DCYLINNERP…YSENKSSGFP (793 aa). Residues Asn54, Asn108, Asn164, Asn183, Asn232, Asn268, Asn323, Asn356, Asn398, Asn407, Asn568, Asn637, Asn653, Asn658, Asn706, Asn716, Asn763, Asn774, Asn781, and Asn809 are each glycosylated (N-linked (GlcNAc...) asparagine). 2 IPT/TIG domains span residues 532 to 609 and 612 to 686; these read SSDQ…GPFT and PVIE…PLII. In terms of domain architecture, IPT/TIG 3 spans 715–796; it reads TNTSDIDQTA…DGQYFIAQIF (82 aa). The chain crosses the membrane as a helical span at residues 816-836; that stretch reads NEMYIGIVAIIIFLALIFFAI. Over 837–912 the chain is Cytoplasmic; that stretch reads KTQVEKYIEE…IRCCFKEHTD (76 aa).

The protein resides in the cell membrane. This chain is Tiger protein E1 (tgrE1), found in Dictyostelium discoideum (Social amoeba).